Reading from the N-terminus, the 256-residue chain is Ras-related protein Rab-26 (256 aa).

Residues 1 to 51 (MSRKKTPKSKGASTPAASTLPTANGARPARSGTALSGPDAPPNGPLQPGRP) form a disordered region. Positions 12–23 (ASTPAASTLPTA) are enriched in low complexity. GTP-binding residues include serine 72, glycine 73, valine 74, glycine 75, lysine 76, threonine 77, cysteine 78, serine 95, and threonine 96. Position 77 (threonine 77) interacts with Mg(2+). 2 short sequence motifs (switch) span residues 86-101 (GAFL…GIDF) and 119-136 (DTAG…YYRD). 2 residues coordinate Mg(2+): threonine 96 and aspartate 119. GTP contacts are provided by glycine 122, asparagine 177, lysine 178, aspartate 180, alanine 208, and lysine 209. S-geranylgeranyl cysteine attachment occurs at residues cysteine 253 and cysteine 254.

This sequence belongs to the small GTPase superfamily. Rab family. Interacts with RIMS1. Interacts with ADRA2B. The cofactor is Mg(2+). Predominantly expressed in brain.

The protein localises to the golgi apparatus membrane. It is found in the cytoplasmic vesicle. It localises to the secretory vesicle membrane. It catalyses the reaction GTP + H2O = GDP + phosphate + H(+). Its activity is regulated as follows. Regulated by guanine nucleotide exchange factors (GEFs) which promote the exchange of bound GDP for free GTP. Regulated by GTPase activating proteins (GAPs) which increase the GTP hydrolysis activity. Inhibited by GDP dissociation inhibitors (GDIs). In terms of biological role, the small GTPases Rab are key regulators of intracellular membrane trafficking, from the formation of transport vesicles to their fusion with membranes. Rabs cycle between an inactive GDP-bound form and an active GTP-bound form that is able to recruit to membranes different set of downstream effectors directly responsible for vesicle formation, movement, tethering and fusion. RAB26 mediates transport of ADRA2A and ADRA2B from the Golgi to the cell membrane. Plays a role in the maturation of zymogenic granules and in pepsinogen secretion in the stomach. Plays a role in the secretion of amylase from acinar granules in the parotid gland. The polypeptide is Ras-related protein Rab-26 (Homo sapiens (Human)).